Here is a 483-residue protein sequence, read N- to C-terminus: MARAIMFQGTGSDVGKSVLVAGLCRVARNRGLKVRPFKPQNMSNNAAVSDDGGEIGRAQWLQALACGVPSSVHMNPVLLKPQTDMGSQLIVQGQVRGEARGRYYQELKPQLMAAVMESFAKVGDGADLVLVEGAGSPAEINLRAGDIANMGFATHADVPVVLVGDIDRGGVIASLVGTHTILPQEDRAMVRGFLINKFRGDISLFDDGLAAITRFTGWRSFGVVPWLKAVSRLPAEDSVVLERAVRGDKKALIVAVPMLPRIANFDDLDPLKAEPAVEVVMVPPGSSLPADAGLVVLPGTKSTIADLLALRENGWDRELVAHVKRGGHVLGICGGFQMLGRRISDPAGIEGNVRDIEGLGLLDIETMTEPEKVVRNVEAVSLLHDEPLEGYEIHIGRTSGPDMARPFARIGDHDDGAVSPDGRIMGTYLHGIFSADRFRHHFLRALGVEGGQMNYRESVEEALGELAEGLEASLDIDGLFALA.

In terms of domain architecture, GATase cobBQ-type spans A251–F438. C333 acts as the Nucleophile in catalysis. The active site involves H430.

It belongs to the CobB/CobQ family. CobQ subfamily.

Its pathway is cofactor biosynthesis; adenosylcobalamin biosynthesis. In terms of biological role, catalyzes amidations at positions B, D, E, and G on adenosylcobyrinic A,C-diamide. NH(2) groups are provided by glutamine, and one molecule of ATP is hydrogenolyzed for each amidation. This Brucella abortus (strain S19) protein is Cobyric acid synthase.